A 142-amino-acid polypeptide reads, in one-letter code: Large ribosomal subunit protein uL11 (142 aa).

It belongs to the universal ribosomal protein uL11 family. In terms of assembly, part of the ribosomal stalk of the 50S ribosomal subunit. Interacts with L10 and the large rRNA to form the base of the stalk. L10 forms an elongated spine to which L12 dimers bind in a sequential fashion forming a multimeric L10(L12)X complex. In terms of processing, one or more lysine residues are methylated.

Its function is as follows. Forms part of the ribosomal stalk which helps the ribosome interact with GTP-bound translation factors. In Mycobacterium tuberculosis (strain ATCC 25177 / H37Ra), this protein is Large ribosomal subunit protein uL11.